The following is a 188-amino-acid chain: MFLTVKLLLGRRCSLKVSGKESVATLKKLVSQHLQVPEEQQHLLFRGQLLADDKYLSDYSIGPNASINVIMRPPEDAALDKTHQTQPLWLQLGQVLDKHFGAKDAKTVLGFLRQEHEERLQRLSLEALEQLVGQLLAQQQLDELAEEKEAPAVASELEQNNGGGGGGGGTGGEGGGKKEEEEGEEADQ.

The Ubiquitin-like domain maps to 1–76 (MFLTVKLLLG…INVIMRPPED (76 aa)). The segment at 146–188 (EEKEAPAVASELEQNNGGGGGGGGTGGEGGGKKEEEEGEEADQ) is disordered. Over residues 161-174 (NGGGGGGGGTGGEG) the composition is skewed to gly residues.

As to expression, expressed specifically in post-meiotic male germ cells of the testis. Abundantly expressed in stage 14-16 spermatids.

The protein localises to the cytoplasm. The polypeptide is Ubiquitin-like protein 4B (Ubl4b) (Mus musculus (Mouse)).